Here is a 365-residue protein sequence, read N- to C-terminus: Sulfate/thiosulfate import ATP-binding protein CysA (365 aa).

Positions 3–237 (IEIANIKKSF…PATRFVLEFM (235 aa)) constitute an ABC transporter domain. 35-42 (GPSGSGKT) serves as a coordination point for ATP.

It belongs to the ABC transporter superfamily. Sulfate/tungstate importer (TC 3.A.1.6) family. As to quaternary structure, the complex is composed of two ATP-binding proteins (CysA), two transmembrane proteins (CysT and CysW) and a solute-binding protein (CysP).

It is found in the cell inner membrane. The enzyme catalyses sulfate(out) + ATP + H2O = sulfate(in) + ADP + phosphate + H(+). It catalyses the reaction thiosulfate(out) + ATP + H2O = thiosulfate(in) + ADP + phosphate + H(+). Part of the ABC transporter complex CysAWTP involved in sulfate/thiosulfate import. Responsible for energy coupling to the transport system. The protein is Sulfate/thiosulfate import ATP-binding protein CysA of Escherichia coli O6:H1 (strain CFT073 / ATCC 700928 / UPEC).